Reading from the N-terminus, the 295-residue chain is Biliverdin reductase A (295 aa).

Residues 1 to 2 (MS) constitute a propeptide that is removed on maturation. NAD(+) contacts are provided by residues 18–19 (RA), 76–79 (SSSH), and Y97. S154 carries the phosphoserine modification. S167 serves as a coordination point for NAD(+). T173 bears the Phosphothreonine mark. Phosphoserine occurs at positions 177 and 229. 2 positions are modified to N6-acetyllysine: K247 and K252. H279, C280, C291, and H292 together coordinate Zn(2+).

The protein belongs to the Gfo/Idh/MocA family. Biliverdin reductase subfamily. As to quaternary structure, monomer. It depends on Zn(2+) as a cofactor.

It is found in the cytoplasm. The protein localises to the cytosol. The catalysed reaction is (4Z,15Z)-bilirubin IXalpha + NAD(+) = biliverdin IXalpha + NADH + H(+). It catalyses the reaction (4Z,15Z)-bilirubin IXalpha + NADP(+) = biliverdin IXalpha + NADPH + H(+). Its pathway is porphyrin-containing compound metabolism; protoheme degradation. Functionally, reduces the gamma-methene bridge of the open tetrapyrrole, biliverdin IXalpha, to bilirubin with the concomitant oxidation of a NADH or NADPH cofactor. Does not reduce bilirubin IXbeta. Uses the reactants NADH or NADPH depending on the pH; NADH is used at the acidic pH range (6-6.9) and NADPH at the alkaline range (8.5-8.7). NADPH, however, is the probable reactant in biological systems. In Mus musculus (Mouse), this protein is Biliverdin reductase A.